Reading from the N-terminus, the 583-residue chain is Pentatricopeptide repeat-containing protein At2g33760 (583 aa).

9 PPR repeats span residues 71–105 (DDFL…NVSP), 106–140 (SNYT…GFGL), 141–171 (DTYV…MPEK), 172–206 (SIVA…GFEP), 207–241 (DSAT…GLDL), 242–276 (NVKL…NVAA), 277–303 (WTAM…MEDD), 309–339 (NNVT…MTKS), and 345–379 (GVEH…GKAT). Residues 383 to 458 (LWTAMLGACK…QVGYSVIEVE (76 aa)) form a type E motif region. The interval 459 to 489 (NKTYMFSMGDESHQETGEIYRYLETLISRCK) is type E(+) motif. The interval 490-583 (EIGYAPVSEE…NGSCSCLDYW (94 aa)) is type DYW motif.

The protein belongs to the PPR family. PCMP-H subfamily.

The sequence is that of Pentatricopeptide repeat-containing protein At2g33760 (PCMP-H6) from Arabidopsis thaliana (Mouse-ear cress).